Consider the following 179-residue polypeptide: Coiled-coil domain-containing protein 32 (179 aa).

Residues aspartate 36–glycine 65 are disordered. Residues glutamate 75–lysine 98 are a coiled coil. Positions leucine 158 to glutamine 179 are disordered.

Interacts with AP2S1; the interaction is direct and mediates association with adaptor protein complex 2 (AP-2).

It is found in the membrane. The protein resides in the coated pit. Regulates clathrin-mediated endocytsois of cargos such as transferrin probably through the association and modulation of adaptor protein complex 2 (AP-2). Has a role in ciliogenesis. Required for proper cephalic and left/right axis development. The chain is Coiled-coil domain-containing protein 32 (Ccdc32) from Mus musculus (Mouse).